The chain runs to 1230 residues: Cullin-associated NEDD8-dissociated protein 1 (1230 aa).

A2 carries the N-acetylalanine modification. HEAT repeat units follow at residues 2-39 (ASAS…KDSI), 44-81 (DSER…KVKE), 83-119 (QVET…ELPP), 131-165 (CKKI…LSRQ), 171-208 (NFHP…SCGN), 210-247 (VFVD…QAGH), 248-282 (RIGE…FESF), 289-366 (EVYP…TRHE), 370-407 (EFYK…QTRP), 424-467 (PLTM…VLPG), 471-510 (QHIP…NHSP), and 515-552 (PHVQ…VIRP). K55 carries the post-translational modification N6-acetyllysine. Residues 315 to 344 (DEDEDENAMDADGGDDDDQGSDDEYSDDDD) are disordered. Phosphoserine is present on S335. Position 558 is a phosphoserine (S558). HEAT repeat units follow at residues 563–602 (PYIK…NLGD), 606–643 (SDLP…LKID), 646–683 (PVLG…NYSD), 688–725 (AMID…VYPS), 729–768 (KISG…TGTN), 770–808 (LGYM…ALTR), 809–845 (ACPK…LGEV), 852–889 (SGQL…GNLP), 890–927 (EYLP…GLKP), 928–960 (YVEN…KLTL), 961–998 (IDPE…DHPQ), 1002–1039 (PLLK…NKPS), 1043–1097 (DLLD…DSCL), 1099–1133 (RLDI…LSTL), and 1140–1189 (QRLD…IPEA). Residue K971 is modified to N6-acetyllysine.

Belongs to the CAND family. Interacts with TBP. Part of a complex that contains CUL1 and RBX1. Interacts with unneddylated cullins: interacts with CUL1, CUL2, CUL3, CUL4A, CUL4B and CUL5. Does not bind neddylated CUL1. Interaction with cullins is abolished in presence of COMMD1, which antagonizes with CAND1 for interacting with cullins. Interacts with ERCC6. Interacts with DCUN1D1, DCUN1D2, DCUN1D3, DCUN1D4 and DCUN1D5; these interactions are bridged by cullins and strongly inhibits the neddylation of cullins.

It localises to the cytoplasm. Its subcellular location is the nucleus. Key assembly factor of SCF (SKP1-CUL1-F-box protein) E3 ubiquitin ligase complexes that promotes the exchange of the substrate-recognition F-box subunit in SCF complexes, thereby playing a key role in the cellular repertoire of SCF complexes. Acts as a F-box protein exchange factor. The exchange activity of CAND1 is coupled with cycles of neddylation conjugation: in the deneddylated state, cullin-binding CAND1 binds CUL1-RBX1, increasing dissociation of the SCF complex and promoting exchange of the F-box protein. Probably plays a similar role in other cullin-RING E3 ubiquitin ligase complexes. This Bos taurus (Bovine) protein is Cullin-associated NEDD8-dissociated protein 1 (CAND1).